Here is a 518-residue protein sequence, read N- to C-terminus: Protein nucleotidyltransferase YdiU (518 aa).

ATP is bound by residues glycine 100, glycine 102, arginine 103, lysine 123, aspartate 135, glycine 136, arginine 193, and arginine 200. Residue aspartate 270 is the Proton acceptor of the active site. 2 residues coordinate Mg(2+): asparagine 271 and aspartate 280. Aspartate 280 serves as a coordination point for ATP.

It belongs to the SELO family. Mg(2+) is required as a cofactor. The cofactor is Mn(2+).

It catalyses the reaction L-seryl-[protein] + ATP = 3-O-(5'-adenylyl)-L-seryl-[protein] + diphosphate. The enzyme catalyses L-threonyl-[protein] + ATP = 3-O-(5'-adenylyl)-L-threonyl-[protein] + diphosphate. It carries out the reaction L-tyrosyl-[protein] + ATP = O-(5'-adenylyl)-L-tyrosyl-[protein] + diphosphate. The catalysed reaction is L-histidyl-[protein] + UTP = N(tele)-(5'-uridylyl)-L-histidyl-[protein] + diphosphate. It catalyses the reaction L-seryl-[protein] + UTP = O-(5'-uridylyl)-L-seryl-[protein] + diphosphate. The enzyme catalyses L-tyrosyl-[protein] + UTP = O-(5'-uridylyl)-L-tyrosyl-[protein] + diphosphate. Its function is as follows. Nucleotidyltransferase involved in the post-translational modification of proteins. It can catalyze the addition of adenosine monophosphate (AMP) or uridine monophosphate (UMP) to a protein, resulting in modifications known as AMPylation and UMPylation. This Xanthomonas oryzae pv. oryzae (strain MAFF 311018) protein is Protein nucleotidyltransferase YdiU.